Consider the following 360-residue polypeptide: Peptide chain release factor 1 (360 aa).

Gln-237 carries the N5-methylglutamine modification.

This sequence belongs to the prokaryotic/mitochondrial release factor family. Methylated by PrmC. Methylation increases the termination efficiency of RF1.

Its subcellular location is the cytoplasm. Its function is as follows. Peptide chain release factor 1 directs the termination of translation in response to the peptide chain termination codons UAG and UAA. The chain is Peptide chain release factor 1 from Cellvibrio japonicus (strain Ueda107) (Pseudomonas fluorescens subsp. cellulosa).